A 245-amino-acid polypeptide reads, in one-letter code: Triosephosphate isomerase (245 aa).

9 to 11 provides a ligand contact to substrate; it reads NWK. H92 (electrophile) is an active-site residue. E164 functions as the Proton acceptor in the catalytic mechanism. Substrate-binding positions include G170, S209, and 230 to 231; that span reads GG.

Belongs to the triosephosphate isomerase family. Homodimer.

It localises to the cytoplasm. The catalysed reaction is D-glyceraldehyde 3-phosphate = dihydroxyacetone phosphate. It functions in the pathway carbohydrate biosynthesis; gluconeogenesis. Its pathway is carbohydrate degradation; glycolysis; D-glyceraldehyde 3-phosphate from glycerone phosphate: step 1/1. In terms of biological role, involved in the gluconeogenesis. Catalyzes stereospecifically the conversion of dihydroxyacetone phosphate (DHAP) to D-glyceraldehyde-3-phosphate (G3P). The protein is Triosephosphate isomerase of Cupriavidus necator (strain ATCC 17699 / DSM 428 / KCTC 22496 / NCIMB 10442 / H16 / Stanier 337) (Ralstonia eutropha).